Reading from the N-terminus, the 358-residue chain is Fructose-bisphosphate aldolase (358 aa).

D-glyceraldehyde 3-phosphate is bound at residue Ser61. Catalysis depends on Asp108, which acts as the Proton donor. Residues His109, Asp143, Glu173, and His225 each contribute to the Zn(2+) site. Residue Gly226 coordinates dihydroxyacetone phosphate. Zn(2+) is bound at residue His264. Dihydroxyacetone phosphate is bound by residues 265–267 (GGS) and 286–289 (NIDT). Phosphothreonine occurs at positions 289, 312, 340, and 342.

This sequence belongs to the class II fructose-bisphosphate aldolase family. In terms of assembly, homodimer. The cofactor is Zn(2+).

It catalyses the reaction beta-D-fructose 1,6-bisphosphate = D-glyceraldehyde 3-phosphate + dihydroxyacetone phosphate. It participates in carbohydrate degradation; glycolysis; D-glyceraldehyde 3-phosphate and glycerone phosphate from D-glucose: step 4/4. Its function is as follows. Catalyzes the aldol condensation of dihydroxyacetone phosphate (DHAP or glycerone-phosphate) with glyceraldehyde 3-phosphate (G3P) to form fructose 1,6-bisphosphate (FBP) in gluconeogenesis and the reverse reaction in glycolysis. This chain is Fructose-bisphosphate aldolase (fba1), found in Schizosaccharomyces pombe (strain 972 / ATCC 24843) (Fission yeast).